Reading from the N-terminus, the 313-residue chain is Protoheme IX farnesyltransferase (313 aa).

8 consecutive transmembrane segments (helical) span residues 23-43, 56-76, 107-127, 128-148, 155-175, 182-202, 243-263, and 291-311; these read ILAYIALTKPRVIELLLVTTI, PLLILNTLLGGVMAAASANTL, LIFGVVLGVGAFAWLWWTANL, LSGLLAVATIAFYVFVYTLVL, NVVWGGAAGCMPVMIGWSAVT, ALVMFAVIFFWTPPHTWALAM, LALAAGVIYAVVAFLAGVWFL, and YLAVVFCALAVDSVVGWPTLF.

This sequence belongs to the UbiA prenyltransferase family. Protoheme IX farnesyltransferase subfamily.

The protein resides in the cell membrane. The enzyme catalyses heme b + (2E,6E)-farnesyl diphosphate + H2O = Fe(II)-heme o + diphosphate. It participates in porphyrin-containing compound metabolism; heme O biosynthesis; heme O from protoheme: step 1/1. In terms of biological role, converts heme B (protoheme IX) to heme O by substitution of the vinyl group on carbon 2 of heme B porphyrin ring with a hydroxyethyl farnesyl side group. This chain is Protoheme IX farnesyltransferase, found in Mycobacteroides abscessus (strain ATCC 19977 / DSM 44196 / CCUG 20993 / CIP 104536 / JCM 13569 / NCTC 13031 / TMC 1543 / L948) (Mycobacterium abscessus).